A 42-amino-acid chain; its full sequence is MTTKKSSYTYPIFTVRWLSIHALAVPTVFFLGAITAMQFIQR.

Residues 17–33 (WLSIHALAVPTVFFLGA) traverse the membrane as a helical segment. H21 lines the heme pocket.

The protein belongs to the PsbE/PsbF family. As to quaternary structure, heterodimer of an alpha subunit and a beta subunit. PSII is composed of 1 copy each of membrane proteins PsbA, PsbB, PsbC, PsbD, PsbE, PsbF, PsbH, PsbI, PsbJ, PsbK, PsbL, PsbM, PsbT, PsbX, PsbY, PsbZ, Psb30/Ycf12, at least 3 peripheral proteins of the oxygen-evolving complex and a large number of cofactors. It forms dimeric complexes. Requires heme b as cofactor.

The protein resides in the plastid. It localises to the chloroplast thylakoid membrane. Its function is as follows. This b-type cytochrome is tightly associated with the reaction center of photosystem II (PSII). PSII is a light-driven water:plastoquinone oxidoreductase that uses light energy to abstract electrons from H(2)O, generating O(2) and a proton gradient subsequently used for ATP formation. It consists of a core antenna complex that captures photons, and an electron transfer chain that converts photonic excitation into a charge separation. This chain is Cytochrome b559 subunit beta, found in Tupiella akineta (Green alga).